The chain runs to 118 residues: Mating-type P-specific polypeptide Pc (118 aa).

The segment at residues 29 to 97 (KTTIYKNGFM…VRRQIAKLER (69 aa)) is a DNA-binding region (HMG box).

It is found in the nucleus. Functionally, mating type proteins are sequence specific DNA-binding proteins that act as master switches in yeast differentiation by controlling gene expression in a cell type-specific fashion. Required for conjugation and efficient meiosis. This Schizosaccharomyces pombe (Fission yeast) protein is Mating-type P-specific polypeptide Pc (mat2-Pc).